The sequence spans 560 residues: Oxygen-dependent choline dehydrogenase (560 aa).

6 to 35 (DYIIIGGGSAGSVLGGRLSEDVSNNVLVLE) provides a ligand contact to FAD. The active-site Proton acceptor is the histidine 472.

This sequence belongs to the GMC oxidoreductase family. FAD is required as a cofactor.

The enzyme catalyses choline + A = betaine aldehyde + AH2. It catalyses the reaction betaine aldehyde + NAD(+) + H2O = glycine betaine + NADH + 2 H(+). It functions in the pathway amine and polyamine biosynthesis; betaine biosynthesis via choline pathway; betaine aldehyde from choline (cytochrome c reductase route): step 1/1. Involved in the biosynthesis of the osmoprotectant glycine betaine. Catalyzes the oxidation of choline to betaine aldehyde and betaine aldehyde to glycine betaine at the same rate. In Staphylococcus xylosus, this protein is Oxygen-dependent choline dehydrogenase.